Reading from the N-terminus, the 181-residue chain is Protein Syd (181 aa).

This sequence belongs to the Syd family.

It is found in the cell inner membrane. Interacts with the SecY protein in vivo. May bind preferentially to an uncomplexed state of SecY, thus functioning either as a chelating agent for excess SecY in the cell or as a regulatory factor that negatively controls the translocase function. The polypeptide is Protein Syd (Shigella flexneri).